A 129-amino-acid chain; its full sequence is Small ribosomal subunit protein uS12 (129 aa).

2 disordered regions span residues 1–25 (MPTYNQLVRFGRKSKTRKTKSPALE) and 110–129 (RKQGRSRYGAPRKQVAVTKK). The span at 10 to 20 (FGRKSKTRKTK) shows a compositional bias: basic residues.

Belongs to the universal ribosomal protein uS12 family. In terms of assembly, part of the 30S ribosomal subunit. Contacts proteins S8 and S17. May interact with IF1 in the 30S initiation complex.

In terms of biological role, with S4 and S5 plays an important role in translational accuracy. Interacts with and stabilizes bases of the 16S rRNA that are involved in tRNA selection in the A site and with the mRNA backbone. Located at the interface of the 30S and 50S subunits, it traverses the body of the 30S subunit contacting proteins on the other side and probably holding the rRNA structure together. The combined cluster of proteins S8, S12 and S17 appears to hold together the shoulder and platform of the 30S subunit. This is Small ribosomal subunit protein uS12 from Rickettsia conorii (strain ATCC VR-613 / Malish 7).